Here is a 363-residue protein sequence, read N- to C-terminus: Class I histocompatibility antigen, Gogo-B*0201 alpha chain (363 aa).

The first 24 residues, 1-24 (MQVTAPRTLLLLLSAALALTETWA), serve as a signal peptide directing secretion. Positions 25 to 114 (GSHSMRYFHT…LRGYYNQSED (90 aa)) are alpha-1. Over 25–308 (GSHSMRYFHT…EPSSQSTIPI (284 aa)) the chain is Extracellular. A glycan (N-linked (GlcNAc...) asparagine) is linked at Asn110. The alpha-2 stretch occupies residues 115–206 (GSHTIQRMYG…ENGKETLQRA (92 aa)). Intrachain disulfides connect Cys125–Cys188 and Cys227–Cys283. An alpha-3 region spans residues 207 to 298 (DPPKTHVTHH…GLPEPLTLRW (92 aa)). An Ig-like C1-type domain is found at 209 to 297 (PKTHVTHHPI…EGLPEPLTLR (89 aa)). The interval 299 to 308 (EPSSQSTIPI) is connecting peptide. A helical membrane pass occupies residues 309–333 (VGIVAGLAVLVVTVAVVAVVAAVMC). Over 334-363 (RRKSSGGKGGSYSQAASSDSAQGSDVSLTA) the chain is Cytoplasmic. The disordered stretch occupies residues 336–363 (KSSGGKGGSYSQAASSDSAQGSDVSLTA). The span at 344-363 (SYSQAASSDSAQGSDVSLTA) shows a compositional bias: low complexity.

The protein belongs to the MHC class I family. As to quaternary structure, heterodimer of an alpha chain and a beta chain (beta-2-microglobulin).

It localises to the membrane. Functionally, involved in the presentation of foreign antigens to the immune system. The protein is Class I histocompatibility antigen, Gogo-B*0201 alpha chain of Gorilla gorilla gorilla (Western lowland gorilla).